Consider the following 171-residue polypeptide: MTTSLPFVLANHGFALNFNVFETNLINLVLVIALLVYFLKGFLGGILERRREAILADLKDAEERLVTASKALEEGQRELAQAKSTAEKILAEAKQRADLIREDGEKRTIEEMARIKQDANANLNAEAARVIEALRAETARTAIDKALAALPKRLNDAKRAELIDRSIEALG.

Residues 26 to 46 (INLVLVIALLVYFLKGFLGGI) traverse the membrane as a helical segment.

The protein belongs to the ATPase B chain family. In terms of assembly, F-type ATPases have 2 components, F(1) - the catalytic core - and F(0) - the membrane proton channel. F(1) has five subunits: alpha(3), beta(3), gamma(1), delta(1), epsilon(1). F(0) has four main subunits: a(1), b(1), b'(1) and c(10-14). The alpha and beta chains form an alternating ring which encloses part of the gamma chain. F(1) is attached to F(0) by a central stalk formed by the gamma and epsilon chains, while a peripheral stalk is formed by the delta, b and b' chains.

Its subcellular location is the cellular thylakoid membrane. Functionally, f(1)F(0) ATP synthase produces ATP from ADP in the presence of a proton or sodium gradient. F-type ATPases consist of two structural domains, F(1) containing the extramembraneous catalytic core and F(0) containing the membrane proton channel, linked together by a central stalk and a peripheral stalk. During catalysis, ATP synthesis in the catalytic domain of F(1) is coupled via a rotary mechanism of the central stalk subunits to proton translocation. Component of the F(0) channel, it forms part of the peripheral stalk, linking F(1) to F(0). This chain is ATP synthase subunit b, found in Synechococcus sp. (strain RCC307).